Reading from the N-terminus, the 136-residue chain is uncharacterized protein (136 aa).

The protein resides in the mitochondrion. This is an uncharacterized protein from Arabidopsis thaliana (Mouse-ear cress).